The primary structure comprises 422 residues: Histidine--tRNA ligase (422 aa).

This sequence belongs to the class-II aminoacyl-tRNA synthetase family. As to quaternary structure, homodimer.

Its subcellular location is the cytoplasm. The enzyme catalyses tRNA(His) + L-histidine + ATP = L-histidyl-tRNA(His) + AMP + diphosphate + H(+). The protein is Histidine--tRNA ligase (hisS) of Photobacterium profundum (strain SS9).